Consider the following 182-residue polypeptide: Large ribosomal subunit protein uL5 (182 aa).

It belongs to the universal ribosomal protein uL5 family. In terms of assembly, part of the 50S ribosomal subunit; part of the 5S rRNA/L5/L18/L25 subcomplex. Contacts the 5S rRNA and the P site tRNA. Forms a bridge to the 30S subunit in the 70S ribosome.

Functionally, this is one of the proteins that bind and probably mediate the attachment of the 5S RNA into the large ribosomal subunit, where it forms part of the central protuberance. In the 70S ribosome it contacts protein S13 of the 30S subunit (bridge B1b), connecting the 2 subunits; this bridge is implicated in subunit movement. Contacts the P site tRNA; the 5S rRNA and some of its associated proteins might help stabilize positioning of ribosome-bound tRNAs. The chain is Large ribosomal subunit protein uL5 from Trichormus variabilis (strain ATCC 29413 / PCC 7937) (Anabaena variabilis).